A 46-amino-acid polypeptide reads, in one-letter code: Large ribosomal subunit protein bL36 (46 aa).

This sequence belongs to the bacterial ribosomal protein bL36 family.

This is Large ribosomal subunit protein bL36 from Salmonella agona (strain SL483).